The chain runs to 376 residues: tRNA-specific 2-thiouridylase MnmA (376 aa).

ATP contacts are provided by residues 10 to 17 (GMSGGVDS) and Met36. The segment at 96 to 98 (NPD) is interaction with target base in tRNA. The active-site Nucleophile is Cys101. A disulfide bridge links Cys101 with Cys198. ATP is bound at residue Gly125. The interaction with tRNA stretch occupies residues 148–150 (KDQ). Cys198 functions as the Cysteine persulfide intermediate in the catalytic mechanism. The interval 305-306 (RY) is interaction with tRNA.

Belongs to the MnmA/TRMU family.

Its subcellular location is the cytoplasm. The catalysed reaction is S-sulfanyl-L-cysteinyl-[protein] + uridine(34) in tRNA + AH2 + ATP = 2-thiouridine(34) in tRNA + L-cysteinyl-[protein] + A + AMP + diphosphate + H(+). In terms of biological role, catalyzes the 2-thiolation of uridine at the wobble position (U34) of tRNA, leading to the formation of s(2)U34. The chain is tRNA-specific 2-thiouridylase MnmA from Protochlamydia amoebophila (strain UWE25).